The primary structure comprises 261 residues: Shikimate dehydrogenase (NADP(+)) (261 aa).

Shikimate-binding positions include 13–15 (SLS) and threonine 60. Residue lysine 64 is the Proton acceptor of the active site. Asparagine 85 and aspartate 100 together coordinate shikimate. NADP(+) contacts are provided by residues 121–125 (GAGGA) and isoleucine 202. Tyrosine 204 serves as a coordination point for shikimate. Residue glycine 225 coordinates NADP(+).

Belongs to the shikimate dehydrogenase family. In terms of assembly, homodimer.

It catalyses the reaction shikimate + NADP(+) = 3-dehydroshikimate + NADPH + H(+). The protein operates within metabolic intermediate biosynthesis; chorismate biosynthesis; chorismate from D-erythrose 4-phosphate and phosphoenolpyruvate: step 4/7. In terms of biological role, involved in the biosynthesis of the chorismate, which leads to the biosynthesis of aromatic amino acids. Catalyzes the reversible NADPH linked reduction of 3-dehydroshikimate (DHSA) to yield shikimate (SA). The polypeptide is Shikimate dehydrogenase (NADP(+)) (Exiguobacterium sibiricum (strain DSM 17290 / CCUG 55495 / CIP 109462 / JCM 13490 / 255-15)).